A 122-amino-acid chain; its full sequence is MIQVESTLQVADNSGAKKVACIKVLGGSKRRYATVGDIIVVSVKEAIPHSKVKKGEVLQAVIVRTKKEVRRMDGSYIKFDSNAAVLLSKQGEPVGTRIFGPVARELRARNFMKIISLAPEVL.

This sequence belongs to the universal ribosomal protein uL14 family. Part of the 50S ribosomal subunit. Forms a cluster with proteins L3 and L19. In the 70S ribosome, L14 and L19 interact and together make contacts with the 16S rRNA in bridges B5 and B8.

In terms of biological role, binds to 23S rRNA. Forms part of two intersubunit bridges in the 70S ribosome. In Lawsonia intracellularis (strain PHE/MN1-00), this protein is Large ribosomal subunit protein uL14.